We begin with the raw amino-acid sequence, 879 residues long: Alanine--tRNA ligase (879 aa).

Positions 566, 570, 668, and 672 each coordinate Zn(2+).

This sequence belongs to the class-II aminoacyl-tRNA synthetase family. Zn(2+) serves as cofactor.

Its subcellular location is the cytoplasm. The catalysed reaction is tRNA(Ala) + L-alanine + ATP = L-alanyl-tRNA(Ala) + AMP + diphosphate. In terms of biological role, catalyzes the attachment of alanine to tRNA(Ala) in a two-step reaction: alanine is first activated by ATP to form Ala-AMP and then transferred to the acceptor end of tRNA(Ala). Also edits incorrectly charged Ser-tRNA(Ala) and Gly-tRNA(Ala) via its editing domain. The polypeptide is Alanine--tRNA ligase (Clostridium botulinum (strain Loch Maree / Type A3)).